The chain runs to 734 residues: Photosystem I P700 chlorophyll a apoprotein A2 (734 aa).

8 helical membrane-spanning segments follow: residues 46-69 (IFAS…FHVA), 135-158 (LYTG…LHLQ), 175-199 (LNHH…HVAI), 273-291 (MAHH…GHMY), 330-353 (IHFQ…QHMY), 369-395 (AALY…IFFI), 417-439 (AIIS…LYVH), and 517-535 (FLVH…LILV). Residues C559 and C568 each contribute to the [4Fe-4S] cluster site. Helical transmembrane passes span 575-596 (AFYL…YWHW) and 643-665 (LSVW…MFLI). Chlorophyll a-binding residues include H654, M662, and Y670. W671 serves as a coordination point for phylloquinone. Residues 707 to 727 (LVGLAHFSVGYIFTYAAFLIA) traverse the membrane as a helical segment.

It belongs to the PsaA/PsaB family. As to quaternary structure, the PsaA/B heterodimer binds the P700 chlorophyll special pair and subsequent electron acceptors. PSI consists of a core antenna complex that captures photons, and an electron transfer chain that converts photonic excitation into a charge separation. The eukaryotic PSI reaction center is composed of at least 11 subunits. P700 is a chlorophyll a/chlorophyll a' dimer, A0 is one or more chlorophyll a, A1 is one or both phylloquinones and FX is a shared 4Fe-4S iron-sulfur center. serves as cofactor.

The protein localises to the plastid. Its subcellular location is the chloroplast thylakoid membrane. It catalyses the reaction reduced [plastocyanin] + hnu + oxidized [2Fe-2S]-[ferredoxin] = oxidized [plastocyanin] + reduced [2Fe-2S]-[ferredoxin]. PsaA and PsaB bind P700, the primary electron donor of photosystem I (PSI), as well as the electron acceptors A0, A1 and FX. PSI is a plastocyanin-ferredoxin oxidoreductase, converting photonic excitation into a charge separation, which transfers an electron from the donor P700 chlorophyll pair to the spectroscopically characterized acceptors A0, A1, FX, FA and FB in turn. Oxidized P700 is reduced on the lumenal side of the thylakoid membrane by plastocyanin. In Draba nemorosa (Woodland whitlowgrass), this protein is Photosystem I P700 chlorophyll a apoprotein A2.